The sequence spans 829 residues: High affinity cAMP-specific and IBMX-insensitive 3',5'-cyclic phosphodiesterase 8A (829 aa).

Positions 16–46 (EDAPSPAAPPLSSGGPRLPQGQKTAALPRTR) are disordered. Serine 20 carries the post-translational modification Phosphoserine. The region spanning 213 to 283 (ACNSVFTALE…DTINSCIRIG (71 aa)) is the PAS domain. A PAC domain is found at 287–329 (QGIYYAKKKNGDNIQQNVKIIPVIGQGGKIRHYVSIIRVCNGN). The disordered stretch occupies residues 341 to 360 (SDTHTDNQTGKHKDRRKGSL). Serine 359 bears the Phosphoserine; by PKA mark. Phosphoserine is present on residues serine 386 and serine 457. Residues 454-461 (RRLSGNEY) form an involved in RAF1-binding region. Tyrosine 461 carries the phosphotyrosine modification. One can recognise a PDEase domain in the interval 480–820 (SLDDVPPRIA…KYWKGLDEMK (341 aa)). The Proton donor role is filled by histidine 556. Residues histidine 560, histidine 596, aspartate 597, and aspartate 726 each contribute to the a divalent metal cation site.

It belongs to the cyclic nucleotide phosphodiesterase family. PDE8 subfamily. Interacts with RAF1. The interaction promotes RAF1 activity. It depends on a divalent metal cation as a cofactor. In terms of processing, phosphorylated at Ser-359 by PKA under elevated cAMP conditions, this enhances catalytic activity. Expressed in most tissues except thymus and peripheral blood leukocytes. Highest levels in testis, ovary, small intestine and colon.

It carries out the reaction 3',5'-cyclic AMP + H2O = AMP + H(+). It functions in the pathway purine metabolism; 3',5'-cyclic AMP degradation; AMP from 3',5'-cyclic AMP: step 1/1. Its activity is regulated as follows. Inhibited by dipyridimole. Insensitive to selective PDE inhibitors including rolipram and zaprinast as well as to the non-selective inhibitor, IBMX. Unaffected by cGMP. Functionally, hydrolyzes the second messenger cAMP, which is a key regulator of many important physiological processes. May be involved in maintaining basal levels of the cyclic nucleotide and/or in the cAMP regulation of germ cell development. Binding to RAF1 reduces RAF1 'Ser-259' inhibitory-phosphorylation and stimulates RAF1-dependent EGF-activated ERK-signaling. Protects against cell death induced by hydrogen peroxide and staurosporine. This chain is High affinity cAMP-specific and IBMX-insensitive 3',5'-cyclic phosphodiesterase 8A (PDE8A), found in Homo sapiens (Human).